Reading from the N-terminus, the 941-residue chain is HMG box transcription factor BBX (941 aa).

Residues 1-18 (MKGSNRNKDHSAEGEGVG) are compositionally biased toward basic and acidic residues. Disordered stretches follow at residues 1 to 21 (MKGS…GKRP), 39 to 80 (FSEE…EQRA), 157 to 200 (VKSP…FGMA), and 221 to 242 (TPEV…LRQK). Composition is skewed to acidic residues over residues 39-52 (FSEE…EEDI) and 63-75 (LEQD…DDES). Residues 80 to 148 (ARRPMNAFLL…AFMKANPGYK (69 aa)) constitute a DNA-binding region (HMG box). The segment covering 177-191 (SSRDLPSPKKAKTEE) has biased composition (basic and acidic residues). S243 is subject to Phosphoserine. A coiled-coil region spans residues 326-370 (GRIKELEKGKEEKEIKMEKTDETRLQKEAEFEKSAKENLRDSKEL). K385 is covalently cross-linked (Glycyl lysine isopeptide (Lys-Gly) (interchain with G-Cter in SUMO2)). Residues 438–482 (IEDPAALNKPEKLKKKKKKSKMDRHGNDKSTPKKTCKKRQSSESD) form a disordered region. Basic residues predominate over residues 449–459 (KLKKKKKKSKM). Phosphoserine is present on residues S478 and S485. 2 stretches are compositionally biased toward basic and acidic residues: residues 499–508 (GIEKLGDTPR) and 536–552 (KKMS…ESRP). 2 disordered regions span residues 499-600 (GIEK…SDCH) and 635-677 (NVDR…KKTK). K573 is covalently cross-linked (Glycyl lysine isopeptide (Lys-Gly) (interchain with G-Cter in SUMO2)). Over residues 661-670 (TFSQSGTSGS) the composition is skewed to low complexity. K696 is covalently cross-linked (Glycyl lysine isopeptide (Lys-Gly) (interchain with G-Cter in SUMO2)). Position 704 is a phosphoserine (S704). Disordered stretches follow at residues 714 to 771 (PVPR…DKWS), 803 to 888 (IPSI…SSTP), and 912 to 941 (HRGQ…CADQ). Residues 723–742 (GNVSSEPTKTSKGPFQSQKK) show a composition bias toward polar residues. Over residues 743 to 757 (NLFHKIVSKYKHKKE) the composition is skewed to basic residues. A compositionally biased stretch (basic and acidic residues) spans 758–771 (KPNVPEKGSGDKWS). A compositionally biased stretch (polar residues) spans 805–817 (SIFNTPEPTTTQE). The residue at position 822 (S822) is a Phosphoserine. Basic residues predominate over residues 823–834 (QKRKARKTKITH). S844 is subject to Phosphoserine. Basic and acidic residues predominate over residues 866–882 (TETDCNDKCSHNTEVGE).

The protein resides in the nucleus. Its function is as follows. Transcription factor that is necessary for cell cycle progression from G1 to S phase. The sequence is that of HMG box transcription factor BBX (BBX) from Homo sapiens (Human).